Consider the following 663-residue polypeptide: Pyoverdine export ATP-binding/permease protein PvdT (663 aa).

One can recognise an ABC transporter domain in the interval 11-250 (IELRDIRKRY…PSAGVERHLQ (240 aa)). 48–55 (GASGSGKS) lines the ATP pocket. A run of 4 helical transmembrane segments spans residues 292 to 312 (ALTLLGIIIGVASVVVMLAVG), 545 to 565 (IAAISLLVGGIGVMNIMLMTV), 598 to 618 (VVGGLAGIALALCIGGVLLLG), and 626 to 646 (LSAIVGAFSCALVTGLVFGFM).

This sequence belongs to the ABC transporter superfamily. Macrolide exporter (TC 3.A.1.122) family. As to quaternary structure, part of the tripartite efflux system PvdRT-OpmQ, which is composed of an inner membrane component with both ATPase and permease domains, PvdT, a periplasmic membrane fusion protein, PvdR, and an outer membrane component, OpmQ.

The protein resides in the cell inner membrane. Part of the tripartite efflux system PvdRT-OpmQ required for the secretion into the extracellular milieu of the siderophore pyoverdine (PVD), which is involved in iron acquisition. This subunit binds PVD and drives its secretion by hydrolyzing ATP. The system is responsible for export of newly synthesized PVD after the final steps of biosynthesis have taken place in the periplasm. It is also responsible for recycling of PVD after internalization of ferri-PVD into the periplasm by the outer-membrane receptor FpvA and release of iron from PVD, thus making PVD available for new cycles of iron uptake. In addition, can expel unwanted metals complexed with PVD from the periplasm into the extracellular medium. This Pseudomonas aeruginosa (strain ATCC 15692 / DSM 22644 / CIP 104116 / JCM 14847 / LMG 12228 / 1C / PRS 101 / PAO1) protein is Pyoverdine export ATP-binding/permease protein PvdT.